The sequence spans 495 residues: Putative myristoylated membrane protein 458R (495 aa).

Residue Gly2 is the site of N-myristoyl glycine; by host attachment. N-linked (GlcNAc...) asparagine; by host glycans are attached at residues Asn58, Asn71, Asn72, Asn103, and Asn111. A coiled-coil region spans residues 150-182 (HLKEIHKIITKEVENAKNNNKDVTKLIEQFSQA). 2 helical membrane-spanning segments follow: residues 194–214 (ILSLIIFSTAFLGLGGVYVGG) and 216–236 (IAFPVTLLLSILAFYQYFNWT). N-linked (GlcNAc...) asparagine; by host glycans are attached at residues Asn262, Asn314, Asn317, Asn349, and Asn457. A helical transmembrane segment spans residues 469 to 489 (LWLLCVAVILLFIGIIGMGLG).

This sequence belongs to the IIV-6 118L/458R family.

Its subcellular location is the membrane. The sequence is that of Putative myristoylated membrane protein 458R from Acheta domesticus (House cricket).